Reading from the N-terminus, the 421-residue chain is 3-isopropylmalate dehydratase large subunit (421 aa).

[4Fe-4S] cluster contacts are provided by cysteine 300, cysteine 360, and cysteine 363.

This sequence belongs to the aconitase/IPM isomerase family. LeuC type 2 subfamily. Heterodimer of LeuC and LeuD. It depends on [4Fe-4S] cluster as a cofactor.

The enzyme catalyses (2R,3S)-3-isopropylmalate = (2S)-2-isopropylmalate. It functions in the pathway amino-acid biosynthesis; L-leucine biosynthesis; L-leucine from 3-methyl-2-oxobutanoate: step 2/4. Catalyzes the isomerization between 2-isopropylmalate and 3-isopropylmalate, via the formation of 2-isopropylmaleate. The polypeptide is 3-isopropylmalate dehydratase large subunit (Lachnoclostridium phytofermentans (strain ATCC 700394 / DSM 18823 / ISDg) (Clostridium phytofermentans)).